The following is a 282-amino-acid chain: Small ribosomal subunit protein uS2 (282 aa).

Residues 260 to 282 form a disordered region; that stretch reads KRRRSKVYKEEEREVVTNEDESR. A compositionally biased stretch (basic and acidic residues) spans 266–282; it reads VYKEEEREVVTNEDESR.

The protein belongs to the universal ribosomal protein uS2 family.

The chain is Small ribosomal subunit protein uS2 from Wolbachia pipientis wMel.